We begin with the raw amino-acid sequence, 194 residues long: NADH-quinone oxidoreductase subunit B (194 aa).

[4Fe-4S] cluster is bound by residues C73, C74, C138, and C168.

It belongs to the complex I 20 kDa subunit family. As to quaternary structure, NDH-1 is composed of 14 different subunits. Subunits NuoB, C, D, E, F, and G constitute the peripheral sector of the complex. The cofactor is [4Fe-4S] cluster.

It is found in the cell inner membrane. The catalysed reaction is a quinone + NADH + 5 H(+)(in) = a quinol + NAD(+) + 4 H(+)(out). Functionally, NDH-1 shuttles electrons from NADH, via FMN and iron-sulfur (Fe-S) centers, to quinones in the respiratory chain. The immediate electron acceptor for the enzyme in this species is believed to be ubiquinone. Couples the redox reaction to proton translocation (for every two electrons transferred, four hydrogen ions are translocated across the cytoplasmic membrane), and thus conserves the redox energy in a proton gradient. The polypeptide is NADH-quinone oxidoreductase subunit B (Rhizobium leguminosarum bv. trifolii (strain WSM2304)).